The chain runs to 48 residues: Phospholipase A2 superbin d (48 aa).

Residues Y28, G30, and G32 each coordinate Ca(2+). A disulfide bridge connects residues C29 and C45. Residue H48 is part of the active site.

Ca(2+) serves as cofactor. In terms of tissue distribution, expressed by the venom gland.

Its subcellular location is the secreted. It carries out the reaction a 1,2-diacyl-sn-glycero-3-phosphocholine + H2O = a 1-acyl-sn-glycero-3-phosphocholine + a fatty acid + H(+). Its function is as follows. Snake venom phospholipase A2 (PLA2) that inhibits collagen-induced platelet aggregation. In terms of inhibition of platelet aggregation, superbin d is less potent as superbin a, b, and c. PLA2 catalyzes the calcium-dependent hydrolysis of the 2-acyl groups in 3-sn-phosphoglycerides. The protein is Phospholipase A2 superbin d of Austrelaps superbus (Lowland copperhead snake).